The chain runs to 214 residues: LexA repressor (214 aa).

Positions isoleucine 28–arginine 48 form a DNA-binding region, H-T-H motif. Residues serine 133 and lysine 172 each act as for autocatalytic cleavage activity in the active site.

It belongs to the peptidase S24 family. In terms of assembly, homodimer.

The enzyme catalyses Hydrolysis of Ala-|-Gly bond in repressor LexA.. Represses a number of genes involved in the response to DNA damage (SOS response), including recA and lexA. In the presence of single-stranded DNA, RecA interacts with LexA causing an autocatalytic cleavage which disrupts the DNA-binding part of LexA, leading to derepression of the SOS regulon and eventually DNA repair. This Herpetosiphon aurantiacus (strain ATCC 23779 / DSM 785 / 114-95) protein is LexA repressor.